Consider the following 338-residue polypeptide: DNA fragmentation factor subunit beta (338 aa).

Positions 4–80 constitute a CIDE-N domain; that stretch reads KPKSVKLRAL…LLTLGQAWQG (77 aa).

In terms of assembly, heterodimer of DFFA and DFFB. Interacts with H1-1.

The protein localises to the cytoplasm. It is found in the nucleus. Its activity is regulated as follows. Inhibited by DFFA (DFF45). Its function is as follows. Nuclease that induces DNA fragmentation and chromatin condensation during apoptosis. Degrades naked DNA and induces apoptotic morphology. This Homo sapiens (Human) protein is DNA fragmentation factor subunit beta (DFFB).